A 124-amino-acid chain; its full sequence is Small ribosomal subunit protein uS12 (124 aa).

Asp89 carries the post-translational modification 3-methylthioaspartic acid.

This sequence belongs to the universal ribosomal protein uS12 family. As to quaternary structure, part of the 30S ribosomal subunit. Contacts proteins S8 and S17. May interact with IF1 in the 30S initiation complex.

Functionally, with S4 and S5 plays an important role in translational accuracy. Interacts with and stabilizes bases of the 16S rRNA that are involved in tRNA selection in the A site and with the mRNA backbone. Located at the interface of the 30S and 50S subunits, it traverses the body of the 30S subunit contacting proteins on the other side and probably holding the rRNA structure together. The combined cluster of proteins S8, S12 and S17 appears to hold together the shoulder and platform of the 30S subunit. The polypeptide is Small ribosomal subunit protein uS12 (Aliivibrio salmonicida (strain LFI1238) (Vibrio salmonicida (strain LFI1238))).